The following is a 254-amino-acid chain: Gamma-glutamyl-gamma-aminobutyrate hydrolase PuuD (254 aa).

Residues 16 to 250 (RNRLKGHATQ…ITACQHHIAE (235 aa)) enclose the Glutamine amidotransferase type-1 domain. The Nucleophile role is filled by C114. Active-site residues include H222 and E224.

It belongs to the peptidase C26 family. Homodimer.

It carries out the reaction 4-(gamma-L-glutamylamino)butanoate + H2O = 4-aminobutanoate + L-glutamate. It participates in amine and polyamine degradation; putrescine degradation; 4-aminobutanoate from putrescine: step 4/4. Functionally, involved in the breakdown of putrescine via hydrolysis of the gamma-glutamyl linkage of gamma-glutamyl-gamma-aminobutyrate. The chain is Gamma-glutamyl-gamma-aminobutyrate hydrolase PuuD (puuD) from Escherichia coli (strain K12).